A 189-amino-acid chain; its full sequence is UPF0301 protein RC0043 (189 aa).

This sequence belongs to the UPF0301 (AlgH) family.

In Rickettsia conorii (strain ATCC VR-613 / Malish 7), this protein is UPF0301 protein RC0043.